The chain runs to 135 residues: Small ribosomal subunit protein uS11 (135 aa).

Residues 1–26 (MPPKSRTAGGARKTRRKEKKNVSHGH) are disordered. Basic residues predominate over residues 12–23 (RKTRRKEKKNVS).

It belongs to the universal ribosomal protein uS11 family. In terms of assembly, part of the 30S ribosomal subunit. Interacts with proteins S7 and S18. Binds to IF-3.

Functionally, located on the platform of the 30S subunit, it bridges several disparate RNA helices of the 16S rRNA. Forms part of the Shine-Dalgarno cleft in the 70S ribosome. The protein is Small ribosomal subunit protein uS11 of Beutenbergia cavernae (strain ATCC BAA-8 / DSM 12333 / CCUG 43141 / JCM 11478 / NBRC 16432 / NCIMB 13614 / HKI 0122).